A 313-amino-acid polypeptide reads, in one-letter code: Peroxidase 57 (313 aa).

The signal sequence occupies residues 1-22 (MMKGAKFSSLLVLFFIFPIAFA). Cystine bridges form between Cys33–Cys109, Cys66–Cys71, Cys115–Cys309, and Cys192–Cys224. The Proton acceptor role is filled by His64. Ca(2+) contacts are provided by Asp65, Val68, Gly70, Asp72, and Ser74. A substrate-binding site is contributed by Pro155. His185 contributes to the heme b binding site. Position 186 (Thr186) interacts with Ca(2+). Ca(2+)-binding residues include Asp233, Ser236, and Asp241.

This sequence belongs to the peroxidase family. Classical plant (class III) peroxidase subfamily. Requires heme b as cofactor. Ca(2+) is required as a cofactor. Mainly expressed in roots.

The protein localises to the secreted. It catalyses the reaction 2 a phenolic donor + H2O2 = 2 a phenolic radical donor + 2 H2O. Its function is as follows. Removal of H(2)O(2), oxidation of toxic reductants, biosynthesis and degradation of lignin, suberization, auxin catabolism, response to environmental stresses such as wounding, pathogen attack and oxidative stress. These functions might be dependent on each isozyme/isoform in each plant tissue. The protein is Peroxidase 57 (PER57) of Arabidopsis thaliana (Mouse-ear cress).